Here is a 316-residue protein sequence, read N- to C-terminus: tRNA dimethylallyltransferase (316 aa).

12–19 (GPTASGKT) is a binding site for ATP. 14–19 (TASGKT) is a substrate binding site. Interaction with substrate tRNA stretches follow at residues 37–40 (DSAL) and 161–165 (QRILR).

It belongs to the IPP transferase family. In terms of assembly, monomer. The cofactor is Mg(2+).

It catalyses the reaction adenosine(37) in tRNA + dimethylallyl diphosphate = N(6)-dimethylallyladenosine(37) in tRNA + diphosphate. Catalyzes the transfer of a dimethylallyl group onto the adenine at position 37 in tRNAs that read codons beginning with uridine, leading to the formation of N6-(dimethylallyl)adenosine (i(6)A). This is tRNA dimethylallyltransferase from Idiomarina loihiensis (strain ATCC BAA-735 / DSM 15497 / L2-TR).